The sequence spans 85 residues: Large ribosomal subunit protein bL27 (85 aa).

The segment at 1–20 is disordered; that stretch reads MAHKKAGGSTRNGRDSEAKR.

It belongs to the bacterial ribosomal protein bL27 family.

This is Large ribosomal subunit protein bL27 from Serratia proteamaculans (strain 568).